Reading from the N-terminus, the 142-residue chain is Transcriptional regulator MraZ (142 aa).

2 SpoVT-AbrB domains span residues 5–47 (RFTH…PMDS) and 76–119 (ATVV…SPEN).

Belongs to the MraZ family. In terms of assembly, forms oligomers.

Its subcellular location is the cytoplasm. The protein resides in the nucleoid. This is Transcriptional regulator MraZ from Thermomicrobium roseum (strain ATCC 27502 / DSM 5159 / P-2).